A 158-amino-acid polypeptide reads, in one-letter code: MGKVESFELDHTKVKAPYVRLITVEEGKKGDKISNFDLRLVQPNENAIPTGGLHTIEHLLAGLLRDRIDGYIDCSPFGCRTGFHLLVWGTPSTTDVAKALKEALEEIRDKIQWEDVPGTTIKSCGNYRDHSLFSAKQWSRDILEKGISDDPFERNVVE.

Histidine 54, histidine 58, and cysteine 124 together coordinate Fe cation.

This sequence belongs to the LuxS family. In terms of assembly, homodimer. Fe cation is required as a cofactor.

The enzyme catalyses S-(5-deoxy-D-ribos-5-yl)-L-homocysteine = (S)-4,5-dihydroxypentane-2,3-dione + L-homocysteine. Functionally, involved in the synthesis of autoinducer 2 (AI-2) which is secreted by bacteria and is used to communicate both the cell density and the metabolic potential of the environment. The regulation of gene expression in response to changes in cell density is called quorum sensing. Catalyzes the transformation of S-ribosylhomocysteine (RHC) to homocysteine (HC) and 4,5-dihydroxy-2,3-pentadione (DPD). This chain is S-ribosylhomocysteine lyase, found in Lactobacillus gasseri (strain ATCC 33323 / DSM 20243 / BCRC 14619 / CIP 102991 / JCM 1131 / KCTC 3163 / NCIMB 11718 / NCTC 13722 / AM63).